Reading from the N-terminus, the 296-residue chain is Small ribosomal subunit protein uS2 (296 aa).

The disordered stretch occupies residues 252-296 (TSSKTVSKLKQSKKLSKTQNIDEETNTEFDQALGGACENNNSDNT).

It belongs to the universal ribosomal protein uS2 family.

The sequence is that of Small ribosomal subunit protein uS2 (rpsB) from Rickettsia prowazekii (strain Madrid E).